The sequence spans 404 residues: MPRLPGRGGPLMLFDSARRGTAASAPTGTGTMYVCGITPYDATHLGHAATMITFDLIQRVWRDAGLDVTYVQNVTDIDDPLLERAARDGEDWKVLAMRETALFREDMEALRIIPPEHYVGAVESIPDIAERVLMLVKEGAAYRLEDGTGDVYFDISATPRFGYESHLSREQMLEIFPERGGDPDRAGKRDPLDPLLWRGARADEPSWPGGDLGPGRPGWHIECAVIALNLLGAQIDVQGGGNDLIFPHHECSAAHAELLTGQTPFARHYVHAGMIGLDGEKMSKSRGNLVFVSRLRADQVDPMAVRLALMSGHYHSDRSWNDELLATAQKRLGRWRKAAAMPCGPSAEAFLAALRGRLADDLDSPGALAAADSWAEAALVGVGDDPAAPTLFTRALDALLGVRL.

A Zn(2+)-binding site is contributed by Cys35. Residues 35 to 38 (CGIT), Thr50, and 73 to 75 (NVT) each bind L-cysteinyl-5'-AMP. The short motif at 37 to 47 (ITPYDATHLGH) is the 'HIGH' region element. The 'ERGGDP' region signature appears at 178–183 (ERGGDP). Trp219 provides a ligand contact to L-cysteinyl-5'-AMP. Residue Cys223 coordinates Zn(2+). 241–243 (GND) provides a ligand contact to L-cysteinyl-5'-AMP. Zn(2+) is bound at residue His248. Ile275 is an L-cysteinyl-5'-AMP binding site. Positions 281–285 (KMSKS) match the 'KMSKS' region motif.

This sequence belongs to the class-I aminoacyl-tRNA synthetase family. MshC subfamily. As to quaternary structure, monomer. Zn(2+) serves as cofactor.

It carries out the reaction 1D-myo-inositol 2-amino-2-deoxy-alpha-D-glucopyranoside + L-cysteine + ATP = 1D-myo-inositol 2-(L-cysteinylamino)-2-deoxy-alpha-D-glucopyranoside + AMP + diphosphate + H(+). Catalyzes the ATP-dependent condensation of GlcN-Ins and L-cysteine to form L-Cys-GlcN-Ins. This Salinispora tropica (strain ATCC BAA-916 / DSM 44818 / JCM 13857 / NBRC 105044 / CNB-440) protein is L-cysteine:1D-myo-inositol 2-amino-2-deoxy-alpha-D-glucopyranoside ligase.